The following is a 508-amino-acid chain: ATP synthase subunit alpha (508 aa).

171-178 is a binding site for ATP; the sequence is GDRQTGKT.

It belongs to the ATPase alpha/beta chains family. In terms of assembly, F-type ATPases have 2 components, CF(1) - the catalytic core - and CF(0) - the membrane proton channel. CF(1) has five subunits: alpha(3), beta(3), gamma(1), delta(1), epsilon(1). CF(0) has three main subunits: a(1), b(2) and c(9-12). The alpha and beta chains form an alternating ring which encloses part of the gamma chain. CF(1) is attached to CF(0) by a central stalk formed by the gamma and epsilon chains, while a peripheral stalk is formed by the delta and b chains.

The protein localises to the cell membrane. The enzyme catalyses ATP + H2O + 4 H(+)(in) = ADP + phosphate + 5 H(+)(out). In terms of biological role, produces ATP from ADP in the presence of a proton gradient across the membrane. The alpha chain is a regulatory subunit. The protein is ATP synthase subunit alpha of Protochlamydia amoebophila (strain UWE25).